The primary structure comprises 225 residues: Jeltraxin (225 aa).

Positions 1–19 (MKGLVIFFCLFYGCHVAGA) are cleaved as a signal peptide. Positions 21 to 223 (GKTIMLFPQK…IVVLRNQFIP (203 aa)) constitute a Pentraxin (PTX) domain. An intrachain disulfide couples Cys51 to Cys112. Residues Asp75 and Asn76 each coordinate Ca(2+). Residue Asn87 is glycosylated (N-linked (GlcNAc...) asparagine). The Ca(2+) site is built by Glu153, Gln154, Asp155, and Gln165. A glycan (N-linked (GlcNAc...) asparagine) is linked at Asn207.

As to quaternary structure, homodecamer consisting of two homopentamer units. Pentraxin (or pentaxin) have a discoid arrangement of 5 non-covalently bound subunits. Ca(2+) serves as cofactor. In terms of processing, glycosylated. Oviduct. Highest expression levels were detected in the pars convoluta with lower levels detected in the pars recta. No expression was detected in the pars uterina.

It localises to the secreted. In terms of biological role, calcium-dependent beta-galactose specific lectin. The protein is Jeltraxin of Lepidobatrachus laevis (Budgett's frog).